The chain runs to 499 residues: Maturase K (499 aa).

This sequence belongs to the intron maturase 2 family. MatK subfamily.

Its subcellular location is the plastid. The protein resides in the chloroplast. Usually encoded in the trnK tRNA gene intron. Probably assists in splicing its own and other chloroplast group II introns. The sequence is that of Maturase K from Camellia sinensis (Tea plant).